The following is a 1007-amino-acid chain: Lysosomal alpha-mannosidase (1007 aa).

Composition is skewed to low complexity over residues 1–10 and 19–28; these read MGADARPLGV and AARPGTSSRA. Positions 1 to 30 are disordered; that stretch reads MGADARPLGVRAGGGGRGAARPGTSSRALP. The first 50 residues, 1 to 50, serve as a signal peptide directing secretion; sequence MGADARPLGVRAGGGGRGAARPGTSSRALPPPLPPLSFLLLLLAAPGARA. Disulfide bonds link Cys-56–Cys-360 and Cys-269–Cys-274. Zn(2+)-binding residues include His-73 and Asp-75. N-linked (GlcNAc...) asparagine glycosylation is present at Asn-134. Position 197 (Asp-197) interacts with Zn(2+). The active-site Nucleophile is Asp-197. N-linked (GlcNAc...) asparagine glycans are attached at residues Asn-311, Asn-347, and Asn-369. 2 cysteine pairs are disulfide-bonded: Cys-414/Cys-474 and Cys-495/Cys-503. His-448 contributes to the Zn(2+) binding site. Asn-499, Asn-543, Asn-643, Asn-649, Asn-690, Asn-764, and Asn-927 each carry an N-linked (GlcNAc...) asparagine glycan.

This sequence belongs to the glycosyl hydrolase 38 family. Requires Zn(2+) as cofactor. In terms of processing, processed into 3 peptides of 72 kDa, 41 kDa and 12 kDa.

The protein resides in the lysosome. The catalysed reaction is Hydrolysis of terminal, non-reducing alpha-D-mannose residues in alpha-D-mannosides.. In terms of biological role, necessary for the catabolism of N-linked carbohydrates released during glycoprotein turnover. The sequence is that of Lysosomal alpha-mannosidase (MAN2B1) from Felis catus (Cat).